A 181-amino-acid chain; its full sequence is Large ribosomal subunit protein eL18 (181 aa).

It belongs to the eukaryotic ribosomal protein eL18 family.

Its subcellular location is the cytoplasm. This is Large ribosomal subunit protein eL18 (rpl18) from Dictyostelium discoideum (Social amoeba).